The sequence spans 691 residues: DNA ligase (691 aa).

NAD(+) contacts are provided by residues 56–60 (DRAYD), 104–105 (SI), and glutamate 139. The active-site N6-AMP-lysine intermediate is the lysine 141. NAD(+) is bound by residues arginine 162, glutamate 198, lysine 314, and lysine 338. 4 residues coordinate Zn(2+): cysteine 429, cysteine 432, cysteine 445, and cysteine 451. Residues 607–691 (TAGDALSGQT…SLLESHGIEI (85 aa)) form the BRCT domain.

Belongs to the NAD-dependent DNA ligase family. LigA subfamily. Mg(2+) serves as cofactor. Requires Mn(2+) as cofactor.

The enzyme catalyses NAD(+) + (deoxyribonucleotide)n-3'-hydroxyl + 5'-phospho-(deoxyribonucleotide)m = (deoxyribonucleotide)n+m + AMP + beta-nicotinamide D-nucleotide.. In terms of biological role, DNA ligase that catalyzes the formation of phosphodiester linkages between 5'-phosphoryl and 3'-hydroxyl groups in double-stranded DNA using NAD as a coenzyme and as the energy source for the reaction. It is essential for DNA replication and repair of damaged DNA. This Natronomonas pharaonis (strain ATCC 35678 / DSM 2160 / CIP 103997 / JCM 8858 / NBRC 14720 / NCIMB 2260 / Gabara) (Halobacterium pharaonis) protein is DNA ligase.